A 234-amino-acid chain; its full sequence is Small ribosomal subunit protein uS2 (234 aa).

The protein belongs to the universal ribosomal protein uS2 family.

The chain is Small ribosomal subunit protein uS2 from Prochlorococcus marinus (strain AS9601).